A 348-amino-acid chain; its full sequence is MAGVTPQLIKELREMTGAGMMDCKNALNETNGDLDKAVQALREAGLGKAAKKAGNVAAEGLISVLVNSDNTKAVLLELNSQTDFVAKNENFVNLTKEITTHALNNGIADAQTLASSKINGEEFQTYLNEKIATIGENLVARKLSLVSGQVVNGYVHATGRVGVVLAATCNDAVKDKAAALLRNIAMHASAMKPTVISYKDLDPAFVESENKAIRAEIEAENDELRRLGKPQKRIPEFVSKSQLTDEAIAAAKARFEDELKAQGKPEKIWANIIPGQIERFIADNTQLDGRFALLSQPYVMDDKKTVEQAIAEVDSSIVITEYIRFELGEGIEKKEEDFAAEVAKQMGK.

An involved in Mg(2+) ion dislocation from EF-Tu region spans residues 82–85 (TDFV).

This sequence belongs to the EF-Ts family.

It localises to the cytoplasm. Its function is as follows. Associates with the EF-Tu.GDP complex and induces the exchange of GDP to GTP. It remains bound to the aminoacyl-tRNA.EF-Tu.GTP complex up to the GTP hydrolysis stage on the ribosome. The sequence is that of Elongation factor Ts from Aliarcobacter butzleri (strain RM4018) (Arcobacter butzleri).